A 342-amino-acid chain; its full sequence is Serpentine receptor class beta-16 (342 aa).

The Extracellular portion of the chain corresponds to 1 to 22; that stretch reads MDRELIEICKENSATAFSVGYQ. A helical transmembrane segment spans residues 23–43; sequence IVYLIYVVLSVTSIFTCSYFI. The Cytoplasmic segment spans residues 44–61; sequence KTFIWNSTFHPNFKLLLT. Residues 62–82 traverse the membrane as a helical segment; sequence MYFFAAIFHSFLFTASYLMMI. The Extracellular segment spans residues 83–102; it reads ERFLDYQTDCDIHVSMVPYA. A helical transmembrane segment spans residues 103-123; that stretch reads IVHSSIACCLFCGMLTQVFMV. At 124 to 141 the chain is on the cytoplasmic side; it reads IERLLATIKIESYEHNTS. The chain crosses the membrane as a helical span at residues 142-162; sequence FWHILAYLFFCIVLPLSLLVW. Residues 163 to 187 are Extracellular-facing; it reads AYQDADYNSPVITAISPPKGVEIRL. Residues 188 to 208 traverse the membrane as a helical segment; that stretch reads NILYIFCFFLAILALILLQVV. The Cytoplasmic segment spans residues 209–237; sequence RFVNKRRESRIEISLSGRFQIVENIDTTT. Residues 238-258 traverse the membrane as a helical segment; sequence FISSILIINMIMSVIYIVGTF. The Extracellular portion of the chain corresponds to 259–274; sequence TLRNFQFDAFINNQPA. A helical membrane pass occupies residues 275 to 295; the sequence is LATVKTIFYLHPLFSFLMPLI. Residues 296–342 are Cytoplasmic-facing; it reads SSYHLSKMRERRVKRREHLMAIKTKGREGSDAYNQLLHDQWTQHFLK.

Belongs to the nematode receptor-like protein srb family. As to expression, expressed throughout the nervous system, in pharyngeal muscle, hermaphrodite vulval muscles and in the male tail. Not expressed in male somatic gonads or sperm.

It is found in the cell membrane. It localises to the perikaryon. The protein localises to the cell projection. The protein resides in the dendrite. Its function is as follows. G-protein coupled receptor. Plays a role in the navigational capacity of sperm and promotes the targeting of sperm derived from males to the fertilization site in the uterus of hermaphrodites. This Caenorhabditis elegans protein is Serpentine receptor class beta-16.